We begin with the raw amino-acid sequence, 46 residues long: Denclatoxin-B (46 aa).

3 disulfides stabilise this stretch: cysteine 3-cysteine 40, cysteine 4-cysteine 32, and cysteine 16-cysteine 26.

Belongs to the plant thionin (TC 1.C.44) family.

It is found in the secreted. In terms of biological role, thionins are small plant proteins which are toxic to animal cells. They seem to exert their toxic effect at the level of the cell membrane. Their precise function is not known. This is Denclatoxin-B from Dendrophthora clavata (Columbian mistletoe).